The chain runs to 461 residues: Chromosomal replication initiator protein DnaA (461 aa).

Residues 1-83 (MDHSPWQRCL…LRFDVGSKPT (83 aa)) form a domain I, interacts with DnaA modulators region. Positions 83–124 (TIDNSVTNSPVSRNTGGNESLFAKATSAPKVAEPESNIPKKT) are domain II. A domain III, AAA+ region region spans residues 125-341 (NVRLNYTFEN…GALNRVIANA (217 aa)). 4 residues coordinate ATP: Gly-169, Gly-171, Lys-172, and Thr-173. The segment at 342–461 (NFTGRAITID…YSNLIRTLSS (120 aa)) is domain IV, binds dsDNA.

This sequence belongs to the DnaA family. In terms of assembly, oligomerizes as a right-handed, spiral filament on DNA at oriC.

It is found in the cytoplasm. Functionally, plays an essential role in the initiation and regulation of chromosomal replication. ATP-DnaA binds to the origin of replication (oriC) to initiate formation of the DNA replication initiation complex once per cell cycle. Binds the DnaA box (a 9 base pair repeat at the origin) and separates the double-stranded (ds)DNA. Forms a right-handed helical filament on oriC DNA; dsDNA binds to the exterior of the filament while single-stranded (ss)DNA is stabiized in the filament's interior. The ATP-DnaA-oriC complex binds and stabilizes one strand of the AT-rich DNA unwinding element (DUE), permitting loading of DNA polymerase. After initiation quickly degrades to an ADP-DnaA complex that is not apt for DNA replication. Binds acidic phospholipids. This is Chromosomal replication initiator protein DnaA from Colwellia psychrerythraea (strain 34H / ATCC BAA-681) (Vibrio psychroerythus).